The primary structure comprises 181 residues: ATP-dependent protease subunit HslV (181 aa).

Residue T2 is part of the active site. G157, C160, and T163 together coordinate Na(+).

Belongs to the peptidase T1B family. HslV subfamily. In terms of assembly, a double ring-shaped homohexamer of HslV is capped on each side by a ring-shaped HslU homohexamer. The assembly of the HslU/HslV complex is dependent on binding of ATP.

It localises to the cytoplasm. It catalyses the reaction ATP-dependent cleavage of peptide bonds with broad specificity.. Allosterically activated by HslU binding. Functionally, protease subunit of a proteasome-like degradation complex believed to be a general protein degrading machinery. This Hahella chejuensis (strain KCTC 2396) protein is ATP-dependent protease subunit HslV.